The primary structure comprises 361 residues: Chorismate synthase (361 aa).

2 residues coordinate NADP(+): arginine 48 and arginine 54. FMN is bound by residues 131-133 (RSS), 243-244 (NA), glycine 287, 302-306 (KPTSS), and arginine 328.

The protein belongs to the chorismate synthase family. As to quaternary structure, homotetramer. It depends on FMNH2 as a cofactor.

It catalyses the reaction 5-O-(1-carboxyvinyl)-3-phosphoshikimate = chorismate + phosphate. It participates in metabolic intermediate biosynthesis; chorismate biosynthesis; chorismate from D-erythrose 4-phosphate and phosphoenolpyruvate: step 7/7. Its function is as follows. Catalyzes the anti-1,4-elimination of the C-3 phosphate and the C-6 proR hydrogen from 5-enolpyruvylshikimate-3-phosphate (EPSP) to yield chorismate, which is the branch point compound that serves as the starting substrate for the three terminal pathways of aromatic amino acid biosynthesis. This reaction introduces a second double bond into the aromatic ring system. The sequence is that of Chorismate synthase from Bradyrhizobium sp. (strain BTAi1 / ATCC BAA-1182).